A 238-amino-acid polypeptide reads, in one-letter code: 2-C-methyl-D-erythritol 4-phosphate cytidylyltransferase (238 aa).

This sequence belongs to the IspD/TarI cytidylyltransferase family. IspD subfamily.

The enzyme catalyses 2-C-methyl-D-erythritol 4-phosphate + CTP + H(+) = 4-CDP-2-C-methyl-D-erythritol + diphosphate. It functions in the pathway isoprenoid biosynthesis; isopentenyl diphosphate biosynthesis via DXP pathway; isopentenyl diphosphate from 1-deoxy-D-xylulose 5-phosphate: step 2/6. Catalyzes the formation of 4-diphosphocytidyl-2-C-methyl-D-erythritol from CTP and 2-C-methyl-D-erythritol 4-phosphate (MEP). In Salinibacter ruber (strain DSM 13855 / M31), this protein is 2-C-methyl-D-erythritol 4-phosphate cytidylyltransferase.